A 624-amino-acid polypeptide reads, in one-letter code: Alpha-mannosidase I MNS4 (624 aa).

The Cytoplasmic segment spans residues 1–7; the sequence is MDSNFKW. A helical; Signal-anchor for type II membrane protein transmembrane segment spans residues 8 to 28; that stretch reads LLFAILISLTFSGFVLHHGVL. The Lumenal segment spans residues 29 to 624; that stretch reads AESVKPDEAK…ETDDQRSYSS (596 aa). Asn115 is a glycosylation site (N-linked (GlcNAc...) asparagine). The active-site Proton donor is Glu122. Residue Asp262 is part of the active site. Glu355 serves as the catalytic Proton donor. Glu376 is a catalytic residue. Thr466 lines the Ca(2+) pocket. N-linked (GlcNAc...) asparagine glycosylation is present at Asn494. The segment at 574–624 is disordered; it reads QTVEKRPQEEEGFTSQSEPIMTISGGSSNDQTGQELTLLESETDDQRSYSS. A compositionally biased stretch (polar residues) spans 586 to 608; sequence FTSQSEPIMTISGGSSNDQTGQE.

It belongs to the glycosyl hydrolase 47 family. The cofactor is Ca(2+).

The protein resides in the endoplasmic reticulum membrane. It participates in protein modification; protein glycosylation. In terms of biological role, can convert Man(9)GlcNAc(2) and Man(8)GlcNAc(2) into N-glycans with a terminal alpha-1,6-linked Man residue in the C-branch. Functions in the formation of unique N-glycan structures that are specifically recognized by components of the endoplasmic reticulum-associated degradation (ERAD) machinery, which leads to the degradation of misfolded glycoproteins. Most likely generates N-glycan signal on misfolded glycoproteins that is subsequently recognized by OS9. Required for ERAD of the heavily glycosylated and misfolded BRI1 variants BRI1-5 and BRI1-9. Does not seem to play role in N-glycan processing of correctly folded proteins destined for secretion. This chain is Alpha-mannosidase I MNS4 (MNS4), found in Arabidopsis thaliana (Mouse-ear cress).